The following is a 247-amino-acid chain: Caffeoyl-CoA O-methyltransferase (247 aa).

Lysine 21 lines the substrate pocket. Residues threonine 63, glutamate 85, 87-88, serine 93, aspartate 111, and alanine 140 each bind S-adenosyl-L-methionine; that span reads GV. Position 163 (aspartate 163) interacts with substrate. Aspartate 163 lines the a divalent metal cation pocket. Aspartate 165 serves as a coordination point for S-adenosyl-L-methionine. A divalent metal cation contacts are provided by aspartate 189 and asparagine 190. Asparagine 194 serves as a coordination point for substrate.

Belongs to the class I-like SAM-binding methyltransferase superfamily. Cation-dependent O-methyltransferase family. CCoAMT subfamily. A divalent metal cation is required as a cofactor.

It carries out the reaction (E)-caffeoyl-CoA + S-adenosyl-L-methionine = (E)-feruloyl-CoA + S-adenosyl-L-homocysteine + H(+). It participates in aromatic compound metabolism; phenylpropanoid biosynthesis. Functionally, methylates caffeoyl-CoA to feruloyl-CoA and 5-hydroxyferuloyl-CoA to sinapoyl-CoA. Plays a role in the synthesis of feruloylated polysaccharides. Involved in the reinforcement of the plant cell wall. Also involved in the responding to wounding or pathogen challenge by the increased formation of cell wall-bound ferulic acid polymers. The sequence is that of Caffeoyl-CoA O-methyltransferase from Populus tremuloides (Quaking aspen).